The primary structure comprises 117 residues: Photosystem II reaction center Psb28 protein (117 aa).

Belongs to the Psb28 family. In terms of assembly, part of the photosystem II complex.

It is found in the cellular thylakoid membrane. The protein is Photosystem II reaction center Psb28 protein of Prochlorococcus marinus (strain MIT 9312).